Reading from the N-terminus, the 142-residue chain is HTH-type transcriptional regulator MntR (142 aa).

An HTH dtxR-type domain is found at 1–63 (MTTPSMEDYI…YEKYRGLVLT (63 aa)). The Mn(2+) site is built by Asp8, Glu11, His77, Glu99, Glu102, and His103.

The protein belongs to the DtxR/MntR family. As to quaternary structure, homodimer.

The protein resides in the cytoplasm. Its activity is regulated as follows. DNA binding is strongly activated by Mn(2+). Functionally, central regulator of manganese homeostasis. This Bacillus velezensis (strain DSM 23117 / BGSC 10A6 / LMG 26770 / FZB42) (Bacillus amyloliquefaciens subsp. plantarum) protein is HTH-type transcriptional regulator MntR.